Here is a 213-residue protein sequence, read N- to C-terminus: Hemolysin-3 homolog (213 aa).

The next 7 helical transmembrane spans lie at A11–F31, I41–L61, I75–G95, F103–F123, F127–K147, G157–W177, and A185–Y205.

Belongs to the UPF0073 (Hly-III) family.

The protein localises to the cell membrane. This chain is Hemolysin-3 homolog (yplQ), found in Bacillus subtilis (strain 168).